We begin with the raw amino-acid sequence, 519 residues long: Cytosol aminopeptidase (519 aa).

S42 is subject to Phosphoserine. Residue K45 is modified to N6-succinyllysine. A Phosphoserine modification is found at S54. 2 positions are modified to N6-succinyllysine: K61 and K103. 2 positions are modified to phosphoserine: S180 and S194. Residues L202 and M203 each contribute to the Zn(2+) site. The residue at position 221 (K221) is an N6-acetyllysine; alternate. K221 is modified (N6-succinyllysine; alternate). At S238 the chain carries Phosphoserine. Zn(2+) contacts are provided by K282 and D287. Positions 282, 287, 292, and 294 each coordinate substrate. A Mg(2+)-binding site is contributed by D287. The active site involves K294. Residues R303, D305, D364, and E366 each coordinate Zn(2+). Residues D305 and D364 each coordinate substrate. The Mg(2+) site is built by D364 and E366. R368 is a catalytic residue. At K455 the chain carries N6-acetyllysine; alternate. K455 carries the post-translational modification N6-succinyllysine; alternate. Position 476 is an N6-succinyllysine (K476). At K489 the chain carries N6-acetyllysine; alternate. K489 carries the post-translational modification N6-succinyllysine; alternate.

This sequence belongs to the peptidase M17 family. In terms of assembly, homohexamer. It depends on Zn(2+) as a cofactor. Mn(2+) serves as cofactor.

The protein resides in the cytoplasm. The enzyme catalyses Release of an N-terminal amino acid, Xaa-|-Yaa-, in which Xaa is preferably Leu, but may be other amino acids including Pro although not Arg or Lys, and Yaa may be Pro. Amino acid amides and methyl esters are also readily hydrolyzed, but rates on arylamides are exceedingly low.. It catalyses the reaction an S-substituted L-cysteinylglycine + H2O = an S-substituted L-cysteine + glycine. The catalysed reaction is L-cysteinylglycine + H2O = L-cysteine + glycine. It carries out the reaction S-benzyl-L-cysteinylglycine + H2O = S-benzyl-L-cysteine + glycine. The enzyme catalyses Release of N-terminal proline from a peptide.. Its activity is regulated as follows. Bimane-S-cysteinylglycine-hydrolyzing activity is inhibited by o-phenanthroline or bestatin, and is activated by the addition of zinc chloride. In terms of biological role, cytosolic metallopeptidase that catalyzes the removal of unsubstituted N-terminal hydrophobic amino acids from various peptides. The presence of Zn(2+) ions is essential for the peptidase activity, and the association with other cofactors can modulate the substrate spectificity of the enzyme. For instance, in the presence of Mn(2+), it displays a specific Cys-Gly hydrolyzing activity of Cys-Gly-S-conjugates. Involved in the metabolism of glutathione and in the degradation of glutathione S-conjugates, which may play a role in the control of the cell redox status. The protein is Cytosol aminopeptidase of Rattus norvegicus (Rat).